Reading from the N-terminus, the 718-residue chain is Adhesin-like cell surface protein MAD1 (718 aa).

A signal peptide spans 1–19 (MKGAIQFLGALAAVQAVSA). Tandem repeats lie at residues 217-243 (PCTEYSCTATDTTTEPAPTEPAPTEPA), 244-265 (PCTEYSCTATDTTTEPAPTEPA), 266-282 (PCTEYSCTATDTTTEPA), 283-309 (PCTEYSCTATDTTTEPAPTEPAPTEPA), 310-336 (PCTEYSCTATDTTTEPAPTEPAPTEPA), 337-358 (PCTEYSCTATDTTTEPAPTEPA), 359-382 (PCTEYSCTATETTSEAVPTTTDEA), 383-402 (PCTDYSCTATEAVPTTTDEA), and 403-420 (PCTEYSCTGVPTSEAVPT). The disordered stretch occupies residues 452-472 (TSIPYETPSPSETETLPPSGT). Residues 462–575 (SETETLPPSG…VTLPPVTTGA (114 aa)) form the CFEM domain. 3 disulfide bridges follow: Cys494/Cys526, Cys504/Cys512, and Cys514/Cys548. Asp509 is a heme binding site. A lipid anchor (GPI-anchor amidated glycine) is attached at Gly693. Positions 694-718 (AASSFKAFSTVMLAGVIGLTALIMA) are cleaved as a propeptide — removed in mature form.

It belongs to the RBT5 family. The GPI-anchor is attached to the protein in the endoplasmic reticulum and serves to target the protein to the cell surface. There, the glucosamine-inositol phospholipid moiety is cleaved off and the GPI-modified mannoprotein is covalently attached via its lipidless GPI glycan remnant to the 1,6-beta-glucan of the outer cell wall layer.

It is found in the secreted. It localises to the cell wall. Its subcellular location is the cell membrane. In terms of biological role, cell surface adhesion protein that plays a key role in switching between the saprophytic lifestyle and the predacious lifestyle (nematode trapping). Likely functions to prevent energy-consuming trap formation in the absence of nematodes, and keeps the fungus in the saprophytic life style. May influence the induction signal of trap formation by limiting the porosity of the cell wall and thus affecting its permeability of nitrogen source. The sequence is that of Adhesin-like cell surface protein MAD1 from Arthrobotrys oligospora (strain ATCC 24927 / CBS 115.81 / DSM 1491) (Nematode-trapping fungus).